The following is a 428-amino-acid chain: MLDIRLFRNEPDTVKSKIELRGDDPKVVDEILELDEQRRKLIIATEEMKARRNKVSEEIALKKRNKENDDDVIAEMRTLGDDIKEKDSQLNEIDNKMTGILCRIPNLISDDVPQGESDEDNVEVKKWGTPREFSFEPKAHWDIVEELKMADFDRAAKVSGARFVYLTNEGAQLERALMNYMITKHTTQHGYTEMMVPQLVNADTMYGTGQLPKFEEDLFKVEKEGLYTIPTAEVPLTNFYRNEIIQPGVLPEKFTGQSACFRSEAGSAGRDTRGLIRLHQFDKVEMVRFEQPEDSWNALEEMTTNAEAILEELGLPYRRVILCTGDIGFSASKTYDLEVWLPSYNDYKEISSCSNCMDFQARRANIRFKRDKAAKPELAHTLNGSGLAVGRTFAAIVENYQNEDGTVTIPEALVPFMGGKTQISKPVK.

231–233 (TAE) serves as a coordination point for L-serine. 262 to 264 (RSE) provides a ligand contact to ATP. Position 285 (Glu285) interacts with L-serine. An ATP-binding site is contributed by 349-352 (EISS). Ser385 contributes to the L-serine binding site.

This sequence belongs to the class-II aminoacyl-tRNA synthetase family. Type-1 seryl-tRNA synthetase subfamily. In terms of assembly, homodimer. The tRNA molecule binds across the dimer.

The protein localises to the cytoplasm. The catalysed reaction is tRNA(Ser) + L-serine + ATP = L-seryl-tRNA(Ser) + AMP + diphosphate + H(+). It catalyses the reaction tRNA(Sec) + L-serine + ATP = L-seryl-tRNA(Sec) + AMP + diphosphate + H(+). It participates in aminoacyl-tRNA biosynthesis; selenocysteinyl-tRNA(Sec) biosynthesis; L-seryl-tRNA(Sec) from L-serine and tRNA(Sec): step 1/1. Functionally, catalyzes the attachment of serine to tRNA(Ser). Is also able to aminoacylate tRNA(Sec) with serine, to form the misacylated tRNA L-seryl-tRNA(Sec), which will be further converted into selenocysteinyl-tRNA(Sec). The chain is Serine--tRNA ligase from Staphylococcus aureus (strain bovine RF122 / ET3-1).